The sequence spans 697 residues: tRNA 5-methylaminomethyl-2-thiouridine biosynthesis bifunctional protein MnmC (697 aa).

Residues 1-275 are tRNA (mnm(5)s(2)U34)-methyltransferase; the sequence is MTAKPHKSCQ…KPATLAAIDH (275 aa). The FAD-dependent cmnm(5)s(2)U34 oxidoreductase stretch occupies residues 280–697; that stretch reads VGGGLASANL…LRKLLKGKAL (418 aa).

The protein in the N-terminal section; belongs to the methyltransferase superfamily. tRNA (mnm(5)s(2)U34)-methyltransferase family. This sequence in the C-terminal section; belongs to the DAO family. Requires FAD as cofactor.

Its subcellular location is the cytoplasm. It catalyses the reaction 5-aminomethyl-2-thiouridine(34) in tRNA + S-adenosyl-L-methionine = 5-methylaminomethyl-2-thiouridine(34) in tRNA + S-adenosyl-L-homocysteine + H(+). Its function is as follows. Catalyzes the last two steps in the biosynthesis of 5-methylaminomethyl-2-thiouridine (mnm(5)s(2)U) at the wobble position (U34) in tRNA. Catalyzes the FAD-dependent demodification of cmnm(5)s(2)U34 to nm(5)s(2)U34, followed by the transfer of a methyl group from S-adenosyl-L-methionine to nm(5)s(2)U34, to form mnm(5)s(2)U34. The sequence is that of tRNA 5-methylaminomethyl-2-thiouridine biosynthesis bifunctional protein MnmC from Shewanella sp. (strain ANA-3).